Consider the following 502-residue polypeptide: UDP-N-acetylmuramate--L-alanine ligase (502 aa).

Position 119 to 125 (119 to 125) interacts with ATP; the sequence is GSHGKST.

Belongs to the MurCDEF family.

The protein localises to the cytoplasm. The catalysed reaction is UDP-N-acetyl-alpha-D-muramate + L-alanine + ATP = UDP-N-acetyl-alpha-D-muramoyl-L-alanine + ADP + phosphate + H(+). It participates in cell wall biogenesis; peptidoglycan biosynthesis. Cell wall formation. The polypeptide is UDP-N-acetylmuramate--L-alanine ligase (Frankia casuarinae (strain DSM 45818 / CECT 9043 / HFP020203 / CcI3)).